Here is a 395-residue protein sequence, read N- to C-terminus: ADP-ribosylation factor-like protein 13A (395 aa).

GTP contacts are provided by residues 28–35 (GLDNSGKS), 71–75 (DLTGD), and 130–133 (NKQD).

Belongs to the small GTPase superfamily. Arf family.

The sequence is that of ADP-ribosylation factor-like protein 13A (Arl13a) from Rattus norvegicus (Rat).